We begin with the raw amino-acid sequence, 67 residues long: Conotoxin Cl6.6b (67 aa).

The first 24 residues, 1–24 (MKLTCVLIAAVLLLAVCQLDSADA), serve as a signal peptide directing secretion. A propeptide spanning residues 25 to 37 (TGYMRKNPSLRSP) is cleaved from the precursor. 3 disulfides stabilise this stretch: Cys43–Cys57, Cys50–Cys61, and Cys56–Cys65.

The protein belongs to the conotoxin O1 superfamily. Expressed by the venom duct.

Its subcellular location is the secreted. In Californiconus californicus (California cone), this protein is Conotoxin Cl6.6b.